The sequence spans 421 residues: Aspartokinase (421 aa).

An ATP-binding site is contributed by 7–10 (KYGG). Substrate is bound at residue 25–30 (RIVATK). Position 41 (Ser41) interacts with ATP. Substrate is bound by residues 45–49 (DTTDE), Glu74, 125–126 (LD), 151–154 (RGGS), and Ser154. ATP is bound by residues 174–175 (SD), 180–185 (YTADPR), and Lys210. ACT domains are found at residues 267 to 343 (VTVL…YDDQ) and 349 to 421 (LVGA…GTGR). Substrate-binding positions include Asp274, 274-279 (DKPGEA), 292-294 (NID), Gln298, 360-361 (VT), 374-375 (NV), and 381-382 (SE).

This sequence belongs to the aspartokinase family. As to quaternary structure, tetramer consisting of 2 isoforms Alpha (catalytic and regulation) and of a homodimer of 2 isoforms Beta (regulation).

The enzyme catalyses L-aspartate + ATP = 4-phospho-L-aspartate + ADP. It functions in the pathway amino-acid biosynthesis; L-lysine biosynthesis via DAP pathway; (S)-tetrahydrodipicolinate from L-aspartate: step 1/4. The protein operates within amino-acid biosynthesis; L-methionine biosynthesis via de novo pathway; L-homoserine from L-aspartate: step 1/3. It participates in amino-acid biosynthesis; L-threonine biosynthesis; L-threonine from L-aspartate: step 1/5. Functionally, catalyzes the phosphorylation of the beta-carboxyl group of aspartic acid with ATP to yield 4-phospho-L-aspartate, which is involved in the branched biosynthetic pathway leading to the biosynthesis of amino acids lysine, threonine, isoleucine and methionine. The chain is Aspartokinase (lysC) from Corynebacterium efficiens (strain DSM 44549 / YS-314 / AJ 12310 / JCM 11189 / NBRC 100395).